We begin with the raw amino-acid sequence, 401 residues long: Leucine aminopeptidase 1 (401 aa).

The signal sequence occupies residues Met1–Ala18. The propeptide occupies Arg19–Lys87. Asn179 is a glycosylation site (N-linked (GlcNAc...) asparagine). 4 residues coordinate Zn(2+): His187, Asp206, Glu245, and Asp272. Cys321 and Cys325 form a disulfide bridge. Residue His354 participates in Zn(2+) binding.

Belongs to the peptidase M28 family. M28E subfamily. In terms of assembly, monomer. Zn(2+) serves as cofactor.

Its subcellular location is the secreted. In terms of biological role, extracellular aminopeptidase that allows assimilation of proteinaceous substrates. In Colletotrichum graminicola (strain M1.001 / M2 / FGSC 10212) (Maize anthracnose fungus), this protein is Leucine aminopeptidase 1 (LAP1).